A 78-amino-acid polypeptide reads, in one-letter code: MDSKNVELYTPRKCSATNRLITAKDHASVQINIGHVNAEGIYNGEQTIFAFCGFLRNNGQSDAALNRLAQQKGFLKSF.

Belongs to the eukaryotic ribosomal protein eS21 family.

The protein is Small ribosomal subunit protein eS21 (rps21) of Dictyostelium discoideum (Social amoeba).